We begin with the raw amino-acid sequence, 396 residues long: L-lactate dehydrogenase (396 aa).

The region spanning Met-1–Gly-380 is the FMN hydroxy acid dehydrogenase domain. A substrate-binding site is contributed by Tyr-24. FMN is bound by residues Ser-106 and Gln-127. Tyr-129 lines the substrate pocket. Thr-155 contributes to the FMN binding site. Arg-164 is a binding site for substrate. Position 251 (Lys-251) interacts with FMN. Catalysis depends on His-275, which acts as the Proton acceptor. Arg-278 lines the substrate pocket. Asp-306 to Arg-330 lines the FMN pocket.

This sequence belongs to the FMN-dependent alpha-hydroxy acid dehydrogenase family. It depends on FMN as a cofactor.

Its subcellular location is the cell inner membrane. It carries out the reaction (S)-lactate + A = pyruvate + AH2. Functionally, catalyzes the conversion of L-lactate to pyruvate. Is coupled to the respiratory chain. The protein is L-lactate dehydrogenase of Salmonella newport (strain SL254).